The chain runs to 124 residues: Large ribosomal subunit protein uL22 (124 aa).

This sequence belongs to the universal ribosomal protein uL22 family. In terms of assembly, part of the 50S ribosomal subunit.

Its function is as follows. This protein binds specifically to 23S rRNA; its binding is stimulated by other ribosomal proteins, e.g. L4, L17, and L20. It is important during the early stages of 50S assembly. It makes multiple contacts with different domains of the 23S rRNA in the assembled 50S subunit and ribosome. Functionally, the globular domain of the protein is located near the polypeptide exit tunnel on the outside of the subunit, while an extended beta-hairpin is found that lines the wall of the exit tunnel in the center of the 70S ribosome. The sequence is that of Large ribosomal subunit protein uL22 from Campylobacter lari (strain RM2100 / D67 / ATCC BAA-1060).